A 56-amino-acid chain; its full sequence is UPF0434 protein WIGBR2520 (56 aa).

The protein belongs to the UPF0434 family.

This chain is UPF0434 protein WIGBR2520, found in Wigglesworthia glossinidia brevipalpis.